The following is a 99-amino-acid chain: Aspartyl/glutamyl-tRNA(Asn/Gln) amidotransferase subunit C (99 aa).

This sequence belongs to the GatC family. In terms of assembly, heterotrimer of A, B and C subunits.

The catalysed reaction is L-glutamyl-tRNA(Gln) + L-glutamine + ATP + H2O = L-glutaminyl-tRNA(Gln) + L-glutamate + ADP + phosphate + H(+). It carries out the reaction L-aspartyl-tRNA(Asn) + L-glutamine + ATP + H2O = L-asparaginyl-tRNA(Asn) + L-glutamate + ADP + phosphate + 2 H(+). Allows the formation of correctly charged Asn-tRNA(Asn) or Gln-tRNA(Gln) through the transamidation of misacylated Asp-tRNA(Asn) or Glu-tRNA(Gln) in organisms which lack either or both of asparaginyl-tRNA or glutaminyl-tRNA synthetases. The reaction takes place in the presence of glutamine and ATP through an activated phospho-Asp-tRNA(Asn) or phospho-Glu-tRNA(Gln). The protein is Aspartyl/glutamyl-tRNA(Asn/Gln) amidotransferase subunit C of Polaromonas sp. (strain JS666 / ATCC BAA-500).